A 606-amino-acid chain; its full sequence is UvrABC system protein C (606 aa).

The region spanning 14-93 (QNPGVYLMKD…IKKHSPRYNV (80 aa)) is the GIY-YIG domain. One can recognise a UVR domain in the interval 203-238 (PDLINRLKFEMQTEADLEHFERAAQIRDTILAIQTT).

The protein belongs to the UvrC family. In terms of assembly, interacts with UvrB in an incision complex.

The protein localises to the cytoplasm. The UvrABC repair system catalyzes the recognition and processing of DNA lesions. UvrC both incises the 5' and 3' sides of the lesion. The N-terminal half is responsible for the 3' incision and the C-terminal half is responsible for the 5' incision. This Desulforapulum autotrophicum (strain ATCC 43914 / DSM 3382 / VKM B-1955 / HRM2) (Desulfobacterium autotrophicum) protein is UvrABC system protein C.